A 443-amino-acid chain; its full sequence is Tubulin beta chain (443 aa).

Positions 11, 69, 138, 142, 143, 144, 204, and 226 each coordinate GTP. Position 69 (glutamate 69) interacts with Mg(2+).

It belongs to the tubulin family. In terms of assembly, dimer of alpha and beta chains. A typical microtubule is a hollow water-filled tube with an outer diameter of 25 nm and an inner diameter of 15 nM. Alpha-beta heterodimers associate head-to-tail to form protofilaments running lengthwise along the microtubule wall with the beta-tubulin subunit facing the microtubule plus end conferring a structural polarity. Microtubules usually have 13 protofilaments but different protofilament numbers can be found in some organisms and specialized cells. Mg(2+) is required as a cofactor.

It is found in the cytoplasm. It localises to the cytoskeleton. Functionally, tubulin is the major constituent of microtubules, a cylinder consisting of laterally associated linear protofilaments composed of alpha- and beta-tubulin heterodimers. Microtubules grow by the addition of GTP-tubulin dimers to the microtubule end, where a stabilizing cap forms. Below the cap, tubulin dimers are in GDP-bound state, owing to GTPase activity of alpha-tubulin. The protein is Tubulin beta chain of Thalassiosira weissflogii (Marine diatom).